Here is a 161-residue protein sequence, read N- to C-terminus: Regulator of ribonuclease activity A (161 aa).

Belongs to the RraA family. In terms of assembly, homotrimer. Binds to both RNA-binding sites in the C-terminal region of Rne and to RhlB.

The protein resides in the cytoplasm. Functionally, globally modulates RNA abundance by binding to RNase E (Rne) and regulating its endonucleolytic activity. Can modulate Rne action in a substrate-dependent manner by altering the composition of the degradosome. Modulates RNA-binding and helicase activities of the degradosome. This chain is Regulator of ribonuclease activity A, found in Shigella boydii serotype 18 (strain CDC 3083-94 / BS512).